We begin with the raw amino-acid sequence, 118 residues long: UPF0212 protein HQ_2663A (118 aa).

This sequence belongs to the UPF0212 family.

In Haloquadratum walsbyi (strain DSM 16790 / HBSQ001), this protein is UPF0212 protein HQ_2663A.